The chain runs to 402 residues: Metacaspase-1 (402 aa).

The interval 1-79 (MAYPGQGGHH…FAPPSGPIGP (79 aa)) is disordered. A compositionally biased stretch (low complexity) spans 23 to 45 (PAPHGYAQPGYGYAPPSGPPQGY). Active-site residues include H193 and C249.

It belongs to the peptidase C14B family.

Its function is as follows. Involved in cell death (apoptosis). The sequence is that of Metacaspase-1 (MCA1) from Mycosarcoma maydis (Corn smut fungus).